The sequence spans 433 residues: Serine hydroxymethyltransferase (433 aa).

(6S)-5,6,7,8-tetrahydrofolate-binding positions include leucine 132 and 136-138 (GHL). Lysine 241 is subject to N6-(pyridoxal phosphate)lysine.

Belongs to the SHMT family. In terms of assembly, homodimer. The cofactor is pyridoxal 5'-phosphate.

Its subcellular location is the cytoplasm. It catalyses the reaction (6R)-5,10-methylene-5,6,7,8-tetrahydrofolate + glycine + H2O = (6S)-5,6,7,8-tetrahydrofolate + L-serine. The protein operates within one-carbon metabolism; tetrahydrofolate interconversion. It functions in the pathway amino-acid biosynthesis; glycine biosynthesis; glycine from L-serine: step 1/1. In terms of biological role, catalyzes the reversible interconversion of serine and glycine with tetrahydrofolate (THF) serving as the one-carbon carrier. This reaction serves as the major source of one-carbon groups required for the biosynthesis of purines, thymidylate, methionine, and other important biomolecules. Also exhibits THF-independent aldolase activity toward beta-hydroxyamino acids, producing glycine and aldehydes, via a retro-aldol mechanism. The chain is Serine hydroxymethyltransferase from Nitrobacter winogradskyi (strain ATCC 25391 / DSM 10237 / CIP 104748 / NCIMB 11846 / Nb-255).